Reading from the N-terminus, the 232-residue chain is ATP phosphoribosyltransferase (232 aa).

The protein belongs to the ATP phosphoribosyltransferase family. Short subfamily. Heteromultimer composed of HisG and HisZ subunits.

Its subcellular location is the cytoplasm. The catalysed reaction is 1-(5-phospho-beta-D-ribosyl)-ATP + diphosphate = 5-phospho-alpha-D-ribose 1-diphosphate + ATP. The protein operates within amino-acid biosynthesis; L-histidine biosynthesis; L-histidine from 5-phospho-alpha-D-ribose 1-diphosphate: step 1/9. Its function is as follows. Catalyzes the condensation of ATP and 5-phosphoribose 1-diphosphate to form N'-(5'-phosphoribosyl)-ATP (PR-ATP). Has a crucial role in the pathway because the rate of histidine biosynthesis seems to be controlled primarily by regulation of HisG enzymatic activity. The chain is ATP phosphoribosyltransferase (hisG) from Mesorhizobium japonicum (strain LMG 29417 / CECT 9101 / MAFF 303099) (Mesorhizobium loti (strain MAFF 303099)).